The following is a 161-amino-acid chain: Ribosomal RNA large subunit methyltransferase H (161 aa).

S-adenosyl-L-methionine-binding positions include Leu-78, Gly-110, and 129–134 (LGRMTF).

The protein belongs to the RNA methyltransferase RlmH family. Homodimer.

The protein resides in the cytoplasm. The catalysed reaction is pseudouridine(1915) in 23S rRNA + S-adenosyl-L-methionine = N(3)-methylpseudouridine(1915) in 23S rRNA + S-adenosyl-L-homocysteine + H(+). Its function is as follows. Specifically methylates the pseudouridine at position 1915 (m3Psi1915) in 23S rRNA. The polypeptide is Ribosomal RNA large subunit methyltransferase H (Symbiobacterium thermophilum (strain DSM 24528 / JCM 14929 / IAM 14863 / T)).